The chain runs to 353 residues: Protein RecA (353 aa).

Position 67 to 74 (67 to 74 (GPESSGKT)) interacts with ATP.

The protein belongs to the RecA family.

It is found in the cytoplasm. Its function is as follows. Can catalyze the hydrolysis of ATP in the presence of single-stranded DNA, the ATP-dependent uptake of single-stranded DNA by duplex DNA, and the ATP-dependent hybridization of homologous single-stranded DNAs. It interacts with LexA causing its activation and leading to its autocatalytic cleavage. In Chlamydia pneumoniae (Chlamydophila pneumoniae), this protein is Protein RecA.